The primary structure comprises 373 residues: MTSNQQRVVVKVGSSSLTSLHGEISSKKLEKLVEQIVRLKDEGHEVLLVSSGAVAAGYRKLGFINRPDTLPEKQASASVGQGLLIEAYSKLFLSHGYIASQILITKSDFSDEKRYNNVRNTMNVLLKRGIIPIINENDTVTVNRLKFGDNDTLSAKVAGLIDADLLTILSDIDGLYDANPRKTPDAALVQEVTEITPEIEASAGDAGSEVGTGGMKSKLDAFKITMASGIKGFLGRADTPGILHEAICGTARGTYFIPNADSHALNHKKQWIAFNSGPEGDIVVHNESKEFIIDRKKSLYPSSIYDINGRFSNGSVVRILDQEGEEIGLGVVNFSSSQLRKWKKDTNQETAASSQAVVDREAFVCHLELSVPL.

K11 contributes to the ATP binding site. The substrate site is built by S51, D138, and N150. ATP is bound by residues S170 to D171 and T212 to K218. A PUA domain is found at E279–Q355.

The protein belongs to the glutamate 5-kinase family.

Its subcellular location is the cytoplasm. It catalyses the reaction L-glutamate + ATP = L-glutamyl 5-phosphate + ADP. It participates in amino-acid biosynthesis; L-proline biosynthesis; L-glutamate 5-semialdehyde from L-glutamate: step 1/2. Its function is as follows. Catalyzes the transfer of a phosphate group to glutamate to form L-glutamate 5-phosphate. The chain is Glutamate 5-kinase 2 from Bacillus licheniformis (strain ATCC 14580 / DSM 13 / JCM 2505 / CCUG 7422 / NBRC 12200 / NCIMB 9375 / NCTC 10341 / NRRL NRS-1264 / Gibson 46).